The sequence spans 646 residues: Sulfate transporter 3.2 (646 aa).

Residues 1–76 (MSSKRASQYH…GYSLEYLKSD (76 aa)) lie on the Cytoplasmic side of the membrane. A helical transmembrane segment spans residues 77-97 (VISGITIASLAIPQGISYAQL). Topologically, residues 98-99 (AN) are extracellular. A helical membrane pass occupies residues 100-120 (LPPILGLYSSLVPPLVYAIMG). The Cytoplasmic portion of the chain corresponds to 121 to 124 (SSRD). Residues 125 to 145 (LAVGTVAVASLLTAAMLGKEV) traverse the membrane as a helical segment. Topologically, residues 146-154 (NAVVNPKLY) are extracellular. Residues 155 to 175 (LHLAFTATFFAGLMQTCLGLL) traverse the membrane as a helical segment. Arg176 is a topological domain (cytoplasmic). The helical transmembrane segment at 177–197 (LGFVVEILSHAAIVGFMGGAA) threads the bilayer. Over 198-235 (TVVCLQQLKGLLGLHHFTHSTDIVTVLRSIFSQSHMWR) the chain is Extracellular. A helical membrane pass occupies residues 236–256 (WESGVLGCCFLIFLLTTKYIS). The Cytoplasmic segment spans residues 257–262 (KKRPKL). Residues 263-283 (FWISAMSPLVSVIFGTIFLYF) form a helical membrane-spanning segment. Over 284–315 (LHDQFHGIQFIGELKKGINPPSITHLVFTPPY) the chain is Extracellular. The helical transmembrane segment at 316–336 (VMLALKVGIITGVIALAEGIA) threads the bilayer. Topologically, residues 337–354 (VGRSFAMYKNYNIDGNKE) are cytoplasmic. The helical transmembrane segment at 355–375 (MIAFGMMNILGSFSSCYLTTG) threads the bilayer. At 376 to 390 (PFSRSAVNYNAGCKT) the chain is on the extracellular side. 2 helical membrane-spanning segments follow: residues 391–411 (ALSN…LTPL) and 412–432 (FFYT…LGLV). Topologically, residues 433–447 (DYEAAIHLWKLDKFD) are extracellular. Residues 448 to 468 (FFVCLSAYLGVVFGTIEIGLI) traverse the membrane as a helical segment. Residues 469 to 646 (LSVGISVMRL…DSPVPEFNNV (178 aa)) are Cytoplasmic-facing. An STAS domain is found at 504 to 627 (HYPQAITRSS…LTVAEAVAAC (124 aa)).

The protein belongs to the SLC26A/SulP transporter (TC 2.A.53) family. As to expression, expressed only in leaves.

Its subcellular location is the membrane. In terms of biological role, h(+)/sulfate cotransporter that may play a role in the regulation of sulfate assimilation. The protein is Sulfate transporter 3.2 (SULTR3;2) of Arabidopsis thaliana (Mouse-ear cress).